A 395-amino-acid chain; its full sequence is DPQKPIYFNGKYHYYYLYNRGYPKGNGTEWRHYVSDDLVHWTDEGVAIPKYTNPDGDIWTGSVVVDKENTAGFGKNALVAIVTQPSAKDKKQEQYLWYSTDKGKSFKFYSGNPVMPNPGTDDFRDPKVIWDDQDNKWVMVMAEGSKIGFYESDNLKDWHYTSGFFPEQTGMVECPDLYMMRASDGTNKWVLGASANGKPWGKPNTYAYWTGSFDGKEFKADQTEAQWLDYGFDWYGGVTFEDSKSTDPLEKRYALAWMNNWDYANNTPTMKNGFNGTDSVIREIRLKEQDGTYSLVSQPIEALEQLTVSTDEIEDQDVNGSKTLSITGDTYQLDTDLSWSELKNAGVRLRESEDQKRHIDVGIFAEDGYAYVNRAATNQPDKSNTYVESKAPYDV.

Asp-1 is a catalytic residue. Substrate is bound by residues 59-60 (WT), 124-125 (RD), Glu-173, and Trp-261.

It belongs to the glycosyl hydrolase 32 family.

It localises to the membrane. It carries out the reaction Hydrolysis of (2-&gt;6)-beta-D-fructofuranan, to remove successive disaccharide residues as levanbiose, i.e. 6-(beta-D-fructofuranosyl)-D-fructose, from the end of the chain.. In terms of biological role, catalyzes the degradation of levan mainly into levanbiose (difructose). Can also hydrolyze inulin. The chain is Levanbiose-producing levanase (levB) from Geobacillus stearothermophilus (Bacillus stearothermophilus).